A 383-amino-acid polypeptide reads, in one-letter code: U-box domain-containing protein 63 (383 aa).

Residues 166–186 (PDGNVSNSHRNTQQKRDFASV) form a disordered region. Positions 201-273 (SLKAILSDPV…HAFRQEEDSD (73 aa)) constitute a U-box domain.

The catalysed reaction is S-ubiquitinyl-[E2 ubiquitin-conjugating enzyme]-L-cysteine + [acceptor protein]-L-lysine = [E2 ubiquitin-conjugating enzyme]-L-cysteine + N(6)-ubiquitinyl-[acceptor protein]-L-lysine.. The protein operates within protein modification; protein ubiquitination. Functionally, functions as an E3 ubiquitin ligase. In Arabidopsis thaliana (Mouse-ear cress), this protein is U-box domain-containing protein 63 (PUB63).